A 143-amino-acid polypeptide reads, in one-letter code: Large ribosomal subunit protein uL15 (143 aa).

The tract at residues M1–H58 is disordered. Residues R21 to G31 are compositionally biased toward gly residues.

It belongs to the universal ribosomal protein uL15 family. Part of the 50S ribosomal subunit.

Functionally, binds to the 23S rRNA. The sequence is that of Large ribosomal subunit protein uL15 from Ectopseudomonas mendocina (strain ymp) (Pseudomonas mendocina).